The sequence spans 502 residues: Probable cytosol aminopeptidase (502 aa).

Lysine 258 and aspartate 263 together coordinate Mn(2+). The active site involves lysine 270. 3 residues coordinate Mn(2+): aspartate 281, aspartate 340, and glutamate 342. The active site involves arginine 344.

This sequence belongs to the peptidase M17 family. Mn(2+) is required as a cofactor.

Its subcellular location is the cytoplasm. It catalyses the reaction Release of an N-terminal amino acid, Xaa-|-Yaa-, in which Xaa is preferably Leu, but may be other amino acids including Pro although not Arg or Lys, and Yaa may be Pro. Amino acid amides and methyl esters are also readily hydrolyzed, but rates on arylamides are exceedingly low.. The catalysed reaction is Release of an N-terminal amino acid, preferentially leucine, but not glutamic or aspartic acids.. In terms of biological role, presumably involved in the processing and regular turnover of intracellular proteins. Catalyzes the removal of unsubstituted N-terminal amino acids from various peptides. This is Probable cytosol aminopeptidase from Clavibacter michiganensis subsp. michiganensis (strain NCPPB 382).